Here is a 218-residue protein sequence, read N- to C-terminus: Transmembrane gamma-carboxyglutamic acid protein 1 (218 aa).

Positions 1-20 (MGRIFLTGEKANSVLKRYPR) are excised as a propeptide. A Gla domain is found at 20 to 66 (RANGLFEEIRQGNIERECKEEVCTFEEAREAFENNEKTKEFWNTYTK). At 21 to 80 (ANGLFEEIRQGNIERECKEEVCTFEEAREAFENNEKTKEFWNTYTKAQQGESNRGSDWFQ) the chain is on the extracellular side. The cysteines at positions 37 and 42 are disulfide-linked. Residues 81–101 (FYLTFPLIFGLFIILLVIFLI) traverse the membrane as a helical segment. At 102-218 (WRCFLRNKTR…AMVPVATTIK (117 aa)) the chain is on the cytoplasmic side. A disordered region spans residues 160–192 (STRLSNCDPPPTYEEATGQMNLRRSETEPHLDP). The span at 182–192 (RRSETEPHLDP) shows a compositional bias: basic and acidic residues.

Post-translationally, gla residues are produced after subsequent post-translational modifications of glutamate by a vitamin K-dependent gamma-carboxylase.

It is found in the membrane. This is Transmembrane gamma-carboxyglutamic acid protein 1 (PRRG1) from Bos taurus (Bovine).